The sequence spans 351 residues: Ribosomal RNA small subunit methyltransferase H (351 aa).

S-adenosyl-L-methionine contacts are provided by residues 48–50 (GGY), Asp-67, Phe-94, Asp-115, and Gln-122. The segment at 298–351 (GPVLPSEAETEVNPRARSAKLRAGERTDGPAPPPLSAIETLASLPAPQGRGTRR) is disordered.

It belongs to the methyltransferase superfamily. RsmH family.

Its subcellular location is the cytoplasm. It carries out the reaction cytidine(1402) in 16S rRNA + S-adenosyl-L-methionine = N(4)-methylcytidine(1402) in 16S rRNA + S-adenosyl-L-homocysteine + H(+). In terms of biological role, specifically methylates the N4 position of cytidine in position 1402 (C1402) of 16S rRNA. In Methylorubrum populi (strain ATCC BAA-705 / NCIMB 13946 / BJ001) (Methylobacterium populi), this protein is Ribosomal RNA small subunit methyltransferase H.